An 885-amino-acid chain; its full sequence is Protein kintoun (885 aa).

Disordered regions lie at residues 208–235, 371–390, 607–636, 644–663, 781–806, and 819–871; these read LSKNPTAEEKEPHPLEHMYPKKPEADAG, LSREDSGVELNSNGESPVED, ELQQLHHQKKLNKKQRKRNKKQRSLSESAC, EHHEQPMDTLKLPHRKQRSY, RRLSEGDSADYVEVDSTHGSGDQPAH, and NNNH…MMFE. Residues 213–232 show a composition bias toward basic and acidic residues; the sequence is TAEEKEPHPLEHMYPKKPEA. The residue at position 376 (serine 376) is a Phosphoserine. Residues 612 to 629 show a composition bias toward basic residues; the sequence is HHQKKLNKKQRKRNKKQR. Serine 784 carries the post-translational modification Phosphoserine. Residues 824 to 837 show a composition bias toward basic and acidic residues; it reads HVKDNKKQSLHDSG. Over residues 842 to 855 the composition is skewed to low complexity; that stretch reads NGSINNKNNHSNEN.

This sequence belongs to the PIH1 family. Kintoun subfamily. In terms of assembly, interacts with Pp1alpha-96A, Pp1-87B, Pp1-13C and flw.

It is found in the cytoplasm. Required for cytoplasmic pre-assembly of axonemal dyneins, thereby playing a central role in motility in cilia and flagella. Involved in pre-assembly of dynein arm complexes in the cytoplasm before intraflagellar transport loads them for the ciliary compartment. The sequence is that of Protein kintoun from Drosophila mojavensis (Fruit fly).